The chain runs to 360 residues: Peptide chain release factor 1 (360 aa).

At Gln235 the chain carries N5-methylglutamine.

Belongs to the prokaryotic/mitochondrial release factor family. Methylated by PrmC. Methylation increases the termination efficiency of RF1.

The protein localises to the cytoplasm. Functionally, peptide chain release factor 1 directs the termination of translation in response to the peptide chain termination codons UAG and UAA. This is Peptide chain release factor 1 from Cupriavidus taiwanensis (strain DSM 17343 / BCRC 17206 / CCUG 44338 / CIP 107171 / LMG 19424 / R1) (Ralstonia taiwanensis (strain LMG 19424)).